Here is a 548-residue protein sequence, read N- to C-terminus: Folylpolyglutamate synthase (548 aa).

130-133 (GKGS) contacts ATP. The Mg(2+) site is built by Ser-157, Glu-234, and His-262. The ATP site is built by Arg-382 and Asp-396.

This sequence belongs to the folylpolyglutamate synthase family. The cofactor is a monovalent cation.

Its subcellular location is the mitochondrion inner membrane. It is found in the mitochondrion matrix. The protein resides in the cytoplasm. It catalyses the reaction (6S)-5,6,7,8-tetrahydrofolyl-(gamma-L-Glu)(n) + L-glutamate + ATP = (6S)-5,6,7,8-tetrahydrofolyl-(gamma-L-Glu)(n+1) + ADP + phosphate + H(+). The protein operates within cofactor biosynthesis; tetrahydrofolylpolyglutamate biosynthesis. Its function is as follows. Catalyzes conversion of folates to polyglutamate derivatives allowing concentration of folate compounds in the cell and the intracellular retention of these cofactors, which are important substrates for most of the folate-dependent enzymes that are involved in one-carbon transfer reactions involved in purine, pyrimidine and amino acid synthesis. Required for methionine synthesis and maintenance of intact mitochondrial DNA. Involved in telomere maintenance. This Saccharomyces cerevisiae (strain AWRI1631) (Baker's yeast) protein is Folylpolyglutamate synthase.